Here is a 117-residue protein sequence, read N- to C-terminus: UPF0295 protein GK0479 (117 aa).

The next 2 helical transmembrane spans lie at 12–32 and 42–62; these read IRTF…LGLF and LFML…FWIG.

Belongs to the UPF0295 family.

Its subcellular location is the cell membrane. This Geobacillus kaustophilus (strain HTA426) protein is UPF0295 protein GK0479.